A 394-amino-acid chain; its full sequence is Elongation factor Tu (394 aa).

One can recognise a tr-type G domain in the interval 10 to 204 (LPHVNIGTIG…AVDEYIPTPT (195 aa)). Residues 19–26 (GHVDHGKT) form a G1 region. Residue 19 to 26 (GHVDHGKT) participates in GTP binding. Position 26 (Thr26) interacts with Mg(2+). The tract at residues 60 to 64 (GITIN) is G2. The interval 81-84 (DCPG) is G3. GTP-binding positions include 81–85 (DCPGH) and 136–139 (NKCD). The interval 136–139 (NKCD) is G4. Residues 174 to 176 (SAL) are G5.

This sequence belongs to the TRAFAC class translation factor GTPase superfamily. Classic translation factor GTPase family. EF-Tu/EF-1A subfamily. As to quaternary structure, monomer.

The protein localises to the cytoplasm. It catalyses the reaction GTP + H2O = GDP + phosphate + H(+). Its function is as follows. GTP hydrolase that promotes the GTP-dependent binding of aminoacyl-tRNA to the A-site of ribosomes during protein biosynthesis. The protein is Elongation factor Tu of Mesoplasma florum (strain ATCC 33453 / NBRC 100688 / NCTC 11704 / L1) (Acholeplasma florum).